A 371-amino-acid polypeptide reads, in one-letter code: S-adenosylmethionine:tRNA ribosyltransferase-isomerase (371 aa).

Belongs to the QueA family. Monomer.

The protein localises to the cytoplasm. It catalyses the reaction 7-aminomethyl-7-carbaguanosine(34) in tRNA + S-adenosyl-L-methionine = epoxyqueuosine(34) in tRNA + adenine + L-methionine + 2 H(+). Its pathway is tRNA modification; tRNA-queuosine biosynthesis. Transfers and isomerizes the ribose moiety from AdoMet to the 7-aminomethyl group of 7-deazaguanine (preQ1-tRNA) to give epoxyqueuosine (oQ-tRNA). This chain is S-adenosylmethionine:tRNA ribosyltransferase-isomerase, found in Prochlorococcus marinus (strain MIT 9313).